The following is a 324-amino-acid chain: Hydroxyacylglutathione hydrolase 2, mitochondrial (324 aa).

The transit peptide at 1–64 (MQTISKASSA…KSIRVSKFCS (64 aa)) directs the protein to the mitochondrion. Zn(2+) is bound by residues His-124 and His-126. Fe cation is bound by residues Asp-128 and His-129. His-182 and Asp-201 together coordinate Zn(2+). Fe cation-binding residues include Asp-201 and His-239.

This sequence belongs to the metallo-beta-lactamase superfamily. Glyoxalase II family. In terms of assembly, monomer. Fe(3+) is required as a cofactor. It depends on Fe(2+) as a cofactor. Zn(2+) serves as cofactor.

The protein resides in the mitochondrion. It carries out the reaction an S-(2-hydroxyacyl)glutathione + H2O = a 2-hydroxy carboxylate + glutathione + H(+). Its pathway is secondary metabolite metabolism; methylglyoxal degradation; (R)-lactate from methylglyoxal: step 2/2. In terms of biological role, thiolesterase that catalyzes the hydrolysis of S-D-lactoyl-glutathione to form glutathione and D-lactic acid. This Arabidopsis thaliana (Mouse-ear cress) protein is Hydroxyacylglutathione hydrolase 2, mitochondrial.